The following is a 338-amino-acid chain: Flap endonuclease 1 (338 aa).

The interval 1 to 98 (MGTDIGDLLQ…ETLSRRKEVR (98 aa)) is N-domain. Asp-27, Asp-80, Glu-152, Glu-154, Asp-173, Asp-175, and Asp-236 together coordinate Mg(2+). The interval 116 to 257 (AAYKYAQASS…TALKLIKKHG (142 aa)) is I-domain. Positions 330–338 (RQKTLDQWF) are interaction with PCNA.

The protein belongs to the XPG/RAD2 endonuclease family. FEN1 subfamily. As to quaternary structure, interacts with PCNA. PCNA stimulates the nuclease activity without altering cleavage specificity. It depends on Mg(2+) as a cofactor.

Its function is as follows. Structure-specific nuclease with 5'-flap endonuclease and 5'-3' exonuclease activities involved in DNA replication and repair. During DNA replication, cleaves the 5'-overhanging flap structure that is generated by displacement synthesis when DNA polymerase encounters the 5'-end of a downstream Okazaki fragment. Binds the unpaired 3'-DNA end and kinks the DNA to facilitate 5' cleavage specificity. Cleaves one nucleotide into the double-stranded DNA from the junction in flap DNA, leaving a nick for ligation. Also involved in the base excision repair (BER) pathway. Acts as a genome stabilization factor that prevents flaps from equilibrating into structures that lead to duplications and deletions. Also possesses 5'-3' exonuclease activity on nicked or gapped double-stranded DNA. In Methanosarcina acetivorans (strain ATCC 35395 / DSM 2834 / JCM 12185 / C2A), this protein is Flap endonuclease 1.